A 614-amino-acid polypeptide reads, in one-letter code: Sodium- and chloride-dependent betaine transporter (614 aa).

At 1–44 (MDRKVAVHEDGYPVVSWVPEEGEMMDQKGKDQVKDRGQWTNKME) the chain is on the cytoplasmic side. Transmembrane regions (helical) follow at residues 45 to 65 (FVLSVAGEIIGLGNVWRFPYL), 73 to 92 (AFFIPYFIFFFSCGIPVFFL), and 117 to 137 (GIGMASVVIESYLNIYYIIIL). At 138–210 (AWALFYLFSS…SGIHDLGSLR (73 aa)) the chain is on the extracellular side. Residues cysteine 157 and cysteine 166 are joined by a disulfide bond. N-linked (GlcNAc...) asparagine glycosylation is found at asparagine 171 and asparagine 183. Helical transmembrane passes span 211–229 (WELALCLLLAWIICYFCIW), 238–255 (VVYFTATFPYLMLIILLI), 291–308 (IFFSFAICQGCLTALGSY), 320–341 (IALCFLNSATSFVAGFVVFSIL), 374–393 (MPLSQLWSCLFFIMLLFLGL), 423–441 (VLILAISVLCYLMGLLLVT), 458–478 (GICLLFLSLFEVICIGWVYGA), 499–518 (ISWLFLTPGLCLATFFFSLS), and 538–556 (IGWLLAFSSMACVPLFIII). The Cytoplasmic portion of the chain corresponds to 557–614 (TFLKTQGSFKKRLRRLITPDPSLPQPGRRPPQDGSSAQNCSSSPAKQELIAWEKETHL). A disordered region spans residues 574 to 602 (TPDPSLPQPGRRPPQDGSSAQNCSSSPAK). The segment covering 589–601 (DGSSAQNCSSSPA) has biased composition (polar residues).

Belongs to the sodium:neurotransmitter symporter (SNF) (TC 2.A.22) family. SLC6A12 subfamily. As to quaternary structure, interacts with LIN7C. As to expression, predominantly expressed in the liver (sinusoidal hepatocyte plasma membranes), also present in the renal medulla, where it localizes to the basolateral membranes of collecting ducts (particularly at the papilla tip) and the thick ascending limbs of Henle (at protein level). Some expression is detected in the leptomeninges, but no expression is detected in brain parenchyma, brain blood vessels, ependymal cells, the renal cortex and the intestine.

It localises to the basolateral cell membrane. The protein localises to the cell membrane. The catalysed reaction is 4-aminobutanoate(out) + chloride(out) + 3 Na(+)(out) = 4-aminobutanoate(in) + chloride(in) + 3 Na(+)(in). It carries out the reaction glycine betaine(out) + 2 chloride(out) + 3 Na(+)(out) = glycine betaine(in) + 2 chloride(in) + 3 Na(+)(in). Its function is as follows. Transporter that mediates cellular uptake of betaine and GABA in a sodium- and chloride-dependent process. May have a role in regulation of GABAergic transmission in the brain through the reuptake of GABA into presynaptic terminals, as well as in osmotic regulation. Probably also involved in renal and hepatic osmotic regulation. The protein is Sodium- and chloride-dependent betaine transporter (Slc6a12) of Mus musculus (Mouse).